Here is a 201-residue protein sequence, read N- to C-terminus: IMP cyclohydrolase (201 aa).

It belongs to the archaeal IMP cyclohydrolase family.

It catalyses the reaction IMP + H2O = 5-formamido-1-(5-phospho-D-ribosyl)imidazole-4-carboxamide. The protein operates within purine metabolism; IMP biosynthesis via de novo pathway; IMP from 5-formamido-1-(5-phospho-D-ribosyl)imidazole-4-carboxamide: step 1/1. Its function is as follows. Catalyzes the cyclization of 5-formylamidoimidazole-4-carboxamide ribonucleotide to IMP. The sequence is that of IMP cyclohydrolase from Methanococcus maripaludis (strain C6 / ATCC BAA-1332).